The sequence spans 358 residues: Molybdenum import ATP-binding protein ModC 2 (358 aa).

Residues 1–234 enclose the ABC transporter domain; sequence MPEQGIEAQL…PRLPLNHPDE (234 aa). 35–42 serves as a coordination point for ATP; that stretch reads GRSGSGKT. In terms of domain architecture, Mop spans 293-358; it reads NSSILNILRV…AQIKSVALME (66 aa).

The protein belongs to the ABC transporter superfamily. Molybdate importer (TC 3.A.1.8) family. In terms of assembly, the complex is composed of two ATP-binding proteins (ModC), two transmembrane proteins (ModB) and a solute-binding protein (ModA).

The protein resides in the cell inner membrane. It catalyses the reaction molybdate(out) + ATP + H2O = molybdate(in) + ADP + phosphate + H(+). Part of the ABC transporter complex ModABC involved in molybdenum import. Responsible for energy coupling to the transport system. This is Molybdenum import ATP-binding protein ModC 2 from Azotobacter vinelandii.